We begin with the raw amino-acid sequence, 208 residues long: Uracil phosphoribosyltransferase (208 aa).

5-phospho-alpha-D-ribose 1-diphosphate is bound by residues R78, R103, and 130–138 (DPMLATGGS). Residues I193 and 198–200 (GDA) contribute to the uracil site. D199 is a 5-phospho-alpha-D-ribose 1-diphosphate binding site.

Belongs to the UPRTase family. Mg(2+) is required as a cofactor.

It catalyses the reaction UMP + diphosphate = 5-phospho-alpha-D-ribose 1-diphosphate + uracil. It functions in the pathway pyrimidine metabolism; UMP biosynthesis via salvage pathway; UMP from uracil: step 1/1. Allosterically activated by GTP. Its function is as follows. Catalyzes the conversion of uracil and 5-phospho-alpha-D-ribose 1-diphosphate (PRPP) to UMP and diphosphate. This is Uracil phosphoribosyltransferase from Salmonella agona (strain SL483).